The primary structure comprises 375 residues: Queuine tRNA-ribosyltransferase (375 aa).

The Proton acceptor role is filled by Asp-93. Substrate contacts are provided by residues 93 to 97 (DSGGF), Asp-147, Gln-191, and Gly-218. An RNA binding region spans residues 249 to 255 (GVGTPLD). Asp-268 acts as the Nucleophile in catalysis. An RNA binding; important for wobble base 34 recognition region spans residues 273 to 277 (TRNAR). Zn(2+) is bound by residues Cys-306, Cys-308, Cys-311, and His-337.

The protein belongs to the queuine tRNA-ribosyltransferase family. In terms of assembly, homodimer. Within each dimer, one monomer is responsible for RNA recognition and catalysis, while the other monomer binds to the replacement base PreQ1. It depends on Zn(2+) as a cofactor.

The enzyme catalyses 7-aminomethyl-7-carbaguanine + guanosine(34) in tRNA = 7-aminomethyl-7-carbaguanosine(34) in tRNA + guanine. It participates in tRNA modification; tRNA-queuosine biosynthesis. Functionally, catalyzes the base-exchange of a guanine (G) residue with the queuine precursor 7-aminomethyl-7-deazaguanine (PreQ1) at position 34 (anticodon wobble position) in tRNAs with GU(N) anticodons (tRNA-Asp, -Asn, -His and -Tyr). Catalysis occurs through a double-displacement mechanism. The nucleophile active site attacks the C1' of nucleotide 34 to detach the guanine base from the RNA, forming a covalent enzyme-RNA intermediate. The proton acceptor active site deprotonates the incoming PreQ1, allowing a nucleophilic attack on the C1' of the ribose to form the product. After dissociation, two additional enzymatic reactions on the tRNA convert PreQ1 to queuine (Q), resulting in the hypermodified nucleoside queuosine (7-(((4,5-cis-dihydroxy-2-cyclopenten-1-yl)amino)methyl)-7-deazaguanosine). This chain is Queuine tRNA-ribosyltransferase, found in Nitratidesulfovibrio vulgaris (strain DP4) (Desulfovibrio vulgaris).